Here is a 429-residue protein sequence, read N- to C-terminus: Trehalose-phosphate phosphatase (429 aa).

D181 functions as the Nucleophile in the catalytic mechanism. Mg(2+)-binding residues include D181, D183, and D368. D181 to D183 is a substrate binding site.

The protein belongs to the trehalose phosphatase family. Mg(2+) serves as cofactor.

It carries out the reaction alpha,alpha-trehalose 6-phosphate + H2O = alpha,alpha-trehalose + phosphate. It functions in the pathway glycan biosynthesis; trehalose biosynthesis. In terms of biological role, removes the phosphate from trehalose 6-phosphate to produce free trehalose. This chain is Trehalose-phosphate phosphatase (otsB), found in Mycobacterium leprae (strain TN).